The primary structure comprises 417 residues: NADH-quinone oxidoreductase subunit D (417 aa).

It belongs to the complex I 49 kDa subunit family. As to quaternary structure, NDH-1 is composed of 14 different subunits. Subunits NuoB, C, D, E, F, and G constitute the peripheral sector of the complex.

It localises to the cell inner membrane. It catalyses the reaction a quinone + NADH + 5 H(+)(in) = a quinol + NAD(+) + 4 H(+)(out). Functionally, NDH-1 shuttles electrons from NADH, via FMN and iron-sulfur (Fe-S) centers, to quinones in the respiratory chain. The immediate electron acceptor for the enzyme in this species is believed to be ubiquinone. Couples the redox reaction to proton translocation (for every two electrons transferred, four hydrogen ions are translocated across the cytoplasmic membrane), and thus conserves the redox energy in a proton gradient. The polypeptide is NADH-quinone oxidoreductase subunit D (Paracidovorax citrulli (strain AAC00-1) (Acidovorax citrulli)).